Here is a 283-residue protein sequence, read N- to C-terminus: 4-hydroxy-3-methylbut-2-enyl diphosphate reductase (283 aa).

C12 lines the [4Fe-4S] cluster pocket. (2E)-4-hydroxy-3-methylbut-2-enyl diphosphate-binding residues include H41 and H74. H41 and H74 together coordinate dimethylallyl diphosphate. H41 and H74 together coordinate isopentenyl diphosphate. Residue C96 participates in [4Fe-4S] cluster binding. H124 serves as a coordination point for (2E)-4-hydroxy-3-methylbut-2-enyl diphosphate. H124 serves as a coordination point for dimethylallyl diphosphate. Position 124 (H124) interacts with isopentenyl diphosphate. Catalysis depends on E126, which acts as the Proton donor. T161 is a (2E)-4-hydroxy-3-methylbut-2-enyl diphosphate binding site. A [4Fe-4S] cluster-binding site is contributed by C189. (2E)-4-hydroxy-3-methylbut-2-enyl diphosphate contacts are provided by S217, N219, and S261. Positions 217, 219, and 261 each coordinate dimethylallyl diphosphate. 3 residues coordinate isopentenyl diphosphate: S217, N219, and S261.

It belongs to the IspH family. Requires [4Fe-4S] cluster as cofactor.

It catalyses the reaction isopentenyl diphosphate + 2 oxidized [2Fe-2S]-[ferredoxin] + H2O = (2E)-4-hydroxy-3-methylbut-2-enyl diphosphate + 2 reduced [2Fe-2S]-[ferredoxin] + 2 H(+). The catalysed reaction is dimethylallyl diphosphate + 2 oxidized [2Fe-2S]-[ferredoxin] + H2O = (2E)-4-hydroxy-3-methylbut-2-enyl diphosphate + 2 reduced [2Fe-2S]-[ferredoxin] + 2 H(+). The protein operates within isoprenoid biosynthesis; dimethylallyl diphosphate biosynthesis; dimethylallyl diphosphate from (2E)-4-hydroxy-3-methylbutenyl diphosphate: step 1/1. It functions in the pathway isoprenoid biosynthesis; isopentenyl diphosphate biosynthesis via DXP pathway; isopentenyl diphosphate from 1-deoxy-D-xylulose 5-phosphate: step 6/6. In terms of biological role, catalyzes the conversion of 1-hydroxy-2-methyl-2-(E)-butenyl 4-diphosphate (HMBPP) into a mixture of isopentenyl diphosphate (IPP) and dimethylallyl diphosphate (DMAPP). Acts in the terminal step of the DOXP/MEP pathway for isoprenoid precursor biosynthesis. The chain is 4-hydroxy-3-methylbut-2-enyl diphosphate reductase from Anaeromyxobacter sp. (strain Fw109-5).